Here is a 312-residue protein sequence, read N- to C-terminus: Fibrinogen-like protein 1 (312 aa).

Positions 1–22 (MAKMFSFILVTTALVMGRGSSA) are cleaved as a signal peptide. Positions 39-60 (LLETRVKQQQVKISQLLHEKQV) form a coiled coil. A Fibrinogen C-terminal domain is found at 74 to 306 (LGGKRQYADC…SVVMKIRPND (233 aa)). Intrachain disulfides connect Cys-83/Cys-112 and Cys-248/Cys-261.

As to quaternary structure, homodimer. Interacts (via the Fibrinogen C-terminal domain) with LAG3 (via Ig-like domains 1 and 2).

Its subcellular location is the secreted. Its function is as follows. Immune suppressive molecule that inhibits antigen-specific T-cell activation by acting as a major ligand of LAG3. Responsible for LAG3 T-cell inhibitory function. Binds LAG3 independently from MHC class II (MHC-II). Secreted by, and promotes growth of, hepatocytes. This Bos taurus (Bovine) protein is Fibrinogen-like protein 1 (FGL1).